Reading from the N-terminus, the 121-residue chain is Large ribosomal subunit protein uL14c (121 aa).

This sequence belongs to the universal ribosomal protein uL14 family. Part of the 50S ribosomal subunit.

Its subcellular location is the plastid. It is found in the apicoplast. Its function is as follows. Binds to 23S rRNA. This Toxoplasma gondii protein is Large ribosomal subunit protein uL14c (rpl14).